The following is a 749-amino-acid chain: Protein phosphatase 1E (749 aa).

Residues 21–128 (EFRGPCGGGE…PPLPPLPRPL (108 aa)) are disordered. 3 tandem repeats follow at residues 31 to 32 (PE), 33 to 34 (PE), and 35 to 36 (PE). Residues 31 to 44 (PEPEPESEPEPEPE) form a 7 X 2 AA tandem repeats of P-E region. The span at 31–45 (PEPEPESEPEPEPEA) shows a compositional bias: acidic residues. Residues 37–38 (SE) form a 4; approximate repeat. 3 repeat units span residues 39 to 40 (PE), 41 to 42 (PE), and 43 to 44 (PE). Positions 46–55 (ELVAAEAAEA) are enriched in low complexity. The segment covering 69 to 102 (ATEEGEQDQDPEPEDEAVEEETATEGEEEEEEEA) has biased composition (acidic residues). Over residues 110-126 (VPPPPQPQLPPLPPLPR) the composition is skewed to pro residues. Residues 224–485 (QIYYETSIHA…DNITVIVVFL (262 aa)) form the PPM-type phosphatase domain. Mn(2+) is bound by residues D270, G271, D432, and D476. A disordered region spans residues 495–537 (SEESEWTENSFQGGQEDGGDDKETHGECKRPWPQHQCSAPADL). Residues 515-524 (DKETHGECKR) are compositionally biased toward basic and acidic residues. Residues S532 and S545 each carry the phosphoserine modification. Residues 608-627 (VKSSLPERSGAGEPRVSFNL) form a disordered region.

Belongs to the PP2C family. Heterotrimer. Interacts with PAX1 and ARHGEF6 (or ARHGEF7). It depends on Mg(2+) as a cofactor. Mn(2+) is required as a cofactor.

The protein localises to the nucleus. It is found in the cytoplasm. It carries out the reaction O-phospho-L-seryl-[protein] + H2O = L-seryl-[protein] + phosphate. It catalyses the reaction O-phospho-L-threonyl-[protein] + H2O = L-threonyl-[protein] + phosphate. Its function is as follows. Protein phosphatase that inactivates multifunctional CaM kinases such as CAMK4 and CAMK2. Dephosphorylates and inactivates PAK. May play a role in the inhibition of actin fiber stress breakdown and in morphological changes driven by TNK2/CDC42. Dephosphorylates PRKAA2. The chain is Protein phosphatase 1E (Ppm1e) from Mus musculus (Mouse).